The primary structure comprises 848 residues: Mitochondrial escape protein 2 (848 aa).

The N-terminal 42 residues, 1 to 42 (MNSITTPRMGATILRTIAPNVGVLSQVLPLGLRRVYPRGVRW), are a transit peptide targeting the mitochondrion. At 43 to 284 (VSSEIQQKDR…IRNFYVTHTR (242 aa)) the chain is on the mitochondrial matrix side. Residues 196–269 (TTVIIKCQGP…TVLHLQYENV (74 aa)) form the RRM domain. Residues 285 to 305 (IAIPVTFALLSILAVLIFDPI) form a helical membrane-spanning segment. The Mitochondrial intermembrane portion of the chain corresponds to 306–848 (REFFIEQKIT…LSQESNNRRK (543 aa)). The segment at 603–627 (RAKKAEEDEPTEKASPEHSQYDEND) is disordered. Positions 613-627 (TEKASPEHSQYDEND) are enriched in basic and acidic residues.

Belongs to the YME2 family.

The protein resides in the mitochondrion inner membrane. Functionally, plays a role in maintaining the mitochondrial genome and in controlling the mtDNA escape. Involved in the regulation of mtDNA nucleotide structure and number. May have a dispensable role in early maturation of pre-rRNA. This Candida glabrata (strain ATCC 2001 / BCRC 20586 / JCM 3761 / NBRC 0622 / NRRL Y-65 / CBS 138) (Yeast) protein is Mitochondrial escape protein 2 (YME2).